We begin with the raw amino-acid sequence, 351 residues long: Methionine import ATP-binding protein MetN (351 aa).

The region spanning 4-249 is the ABC transporter domain; it reads VQLDHVSVTF…PKAELTQKFV (246 aa). 41–48 is a binding site for ATP; that stretch reads GFSGAGKS.

The protein belongs to the ABC transporter superfamily. Methionine importer (TC 3.A.1.24) family. In terms of assembly, the complex is composed of two ATP-binding proteins (MetN), two transmembrane proteins (MetI) and a solute-binding protein (MetQ).

The protein resides in the cell membrane. It catalyses the reaction L-methionine(out) + ATP + H2O = L-methionine(in) + ADP + phosphate + H(+). The catalysed reaction is D-methionine(out) + ATP + H2O = D-methionine(in) + ADP + phosphate + H(+). In terms of biological role, part of the ABC transporter complex MetNIQ involved in methionine import. Responsible for energy coupling to the transport system. The protein is Methionine import ATP-binding protein MetN of Lactobacillus delbrueckii subsp. bulgaricus (strain ATCC BAA-365 / Lb-18).